Reading from the N-terminus, the 263-residue chain is uncharacterized protein (263 aa).

7 consecutive transmembrane segments (helical) span residues 1-21, 38-58, 82-102, 118-138, 151-171, 196-216, and 230-250; these read MLVI…ILCQ, LFLL…HYCY, IPIS…CMMV, GISI…IFTY, GKFG…ANLL, FALI…VIPT, and FWVK…VQYV.

It is found in the membrane. This is an uncharacterized protein from Saccharomyces cerevisiae (strain ATCC 204508 / S288c) (Baker's yeast).